Here is a 347-residue protein sequence, read N- to C-terminus: Dihydroorotate dehydrogenase (quinone) (347 aa).

FMN is bound by residues 62–66 (AGLDK) and A86. Residue K66 participates in substrate binding. A substrate-binding site is contributed by 111–115 (NRMGF). FMN contacts are provided by N139 and N172. N172 provides a ligand contact to substrate. Catalysis depends on S175, which acts as the Nucleophile. Residue N177 participates in substrate binding. 2 residues coordinate FMN: K217 and T245. 246–247 (NT) is a binding site for substrate. Residues G268, G297, and 318–319 (YT) contribute to the FMN site.

The protein belongs to the dihydroorotate dehydrogenase family. Type 2 subfamily. Monomer. Requires FMN as cofactor.

It is found in the cell membrane. It carries out the reaction (S)-dihydroorotate + a quinone = orotate + a quinol. Its pathway is pyrimidine metabolism; UMP biosynthesis via de novo pathway; orotate from (S)-dihydroorotate (quinone route): step 1/1. Functionally, catalyzes the conversion of dihydroorotate to orotate with quinone as electron acceptor. In Coxiella burnetii (strain CbuK_Q154) (Coxiella burnetii (strain Q154)), this protein is Dihydroorotate dehydrogenase (quinone).